A 731-amino-acid chain; its full sequence is MGVGIQTMWSILLLFSCIFSAASASVSYDHKAIIINGQKRILISGSIHYPRSTPEMWPDLIQKAKDGGLDVIQTYVFWNGHEPSPGNYYFEERYDLVKFIKLVQQEGLFVNLRIGPYVCAEWNFGGFPVWLKYVPGIAFRTDNEPFKAAMQKFTEKIVSMMKAEKLFQTQGGPIILSQIENEFGPVEWEIGAPGKAYTKWAAQMAVGLDTGVPWIMCKQEDAPDPVIDTCNGFYCENFKPNKDYKPKMWTEVWTGWYTEFGGAVPTRPAEDVAFSVARFIQSGGSFLNYYMYHGGTNFGRTAGGPFMATSYDYDAPLDEYGLPREPKWGHLRDLHKAIKSCESALVSVDPSVTKLGSNQEAHVFKSESDCAAFLANYDAKYSVKVSFGGGQYDLPPWSISILPDCKTEVYNTAKVGSQSSQVQMTPVHSGFPWQSFIEETTSSDETDTTTLDGLYEQINITRDTTDYLWYMTDITIGSDEAFLKNGKSPLLTIFSAGHALNVFINGQLSGTVYGSLENPKLSFSQNVNLRSGINKLALLSISVGLPNVGTHFETWNAGVLGPITLKGLNSGTWDMSGWKWTYKTGLKGEALGLHTVTGSSSVEWVEGPSMAEKQPLTWYKATFNAPPGDAPLALDMGSMGKGQIWINGQSVGRHWPGYIARGSCGDCSYAGTYDDKKCRTHCGEPSQRWYHIPRSWLTPTGNLLVVFEEWGGDPSRISLVERGTALDAKKL.

The first 23 residues, 1–23 (MGVGIQTMWSILLLFSCIFSAAS), serve as a signal peptide directing secretion. Glu-182 functions as the Proton donor in the catalytic mechanism. The Nucleophile role is filled by Glu-251. An N-linked (GlcNAc...) asparagine glycan is attached at Asn-459.

The protein belongs to the glycosyl hydrolase 35 family.

Its subcellular location is the secreted. The protein resides in the extracellular space. The protein localises to the apoplast. It catalyses the reaction Hydrolysis of terminal non-reducing beta-D-galactose residues in beta-D-galactosides.. Its function is as follows. Involved in cell wall degradation. Degrades polysaccharides containing beta-(1--&gt;4)-linked galactans, acting as an exo-(1--&gt;4)-beta-D-galactanase. The sequence is that of Beta-galactosidase from Malus domestica (Apple).